The chain runs to 79 residues: Small ribosomal subunit protein uS11 (79 aa).

Position 14 is a phosphoserine (Ser14). Residues Lys59 and Lys61 each participate in a glycyl lysine isopeptide (Lys-Gly) (interchain with G-Cter in SUMO2) cross-link.

It belongs to the universal ribosomal protein uS11 family. Component of the small ribosomal subunit. Part of the small subunit (SSU) processome, composed of more than 70 proteins and the RNA chaperone small nucleolar RNA (snoRNA) U3.

Its subcellular location is the cytoplasm. The protein resides in the nucleus. It localises to the nucleolus. Component of the small ribosomal subunit. The ribosome is a large ribonucleoprotein complex responsible for the synthesis of proteins in the cell. Part of the small subunit (SSU) processome, first precursor of the small eukaryotic ribosomal subunit. During the assembly of the SSU processome in the nucleolus, many ribosome biogenesis factors, an RNA chaperone and ribosomal proteins associate with the nascent pre-rRNA and work in concert to generate RNA folding, modifications, rearrangements and cleavage as well as targeted degradation of pre-ribosomal RNA by the RNA exosome. This is Small ribosomal subunit protein uS11 (RPS14) from Sus scrofa (Pig).